The chain runs to 512 residues: Cytochrome P450 monooxygenase TwmD (512 aa).

Position 454 (C454) interacts with heme.

It belongs to the cytochrome P450 family. Heme serves as cofactor.

The protein operates within secondary metabolite biosynthesis. Cytochrome P450 monooxygenase; part of the gene cluster that mediates the biosynthesis of wortmanamides A and B, reduced long-chain polyketides amidated with a specific omega-amino acid, 5-aminopentanoic acid (5PA). The PKS modules of TwmB are involved in the synthesis of the polyketide backbone, whereas the non-canonical C domain of TwmB is a bonafide condensation domain that specifically selects 5PA and catalyzes amidation to release polyketide chain. The C domain clearly prefers C16 and C18 fatty acyl substrates, which is consistent with simultaneous formation of both octaketide and nonaketide acyl amides wortmanamides A and B. Because TwmB lacks a designated enoylreductase (ER) domain, the required activity is provided the enoyl reductase TwmE. The roles of the remaining enzymes have still to be clarified. The polypeptide is Cytochrome P450 monooxygenase TwmD (Talaromyces wortmannii (Penicillium wortmannii)).